A 507-amino-acid polypeptide reads, in one-letter code: Histidine ammonia-lyase (507 aa).

A cross-link (5-imidazolinone (Ala-Gly)) is located at residues 141 to 143 (ASG). A 2,3-didehydroalanine (Ser) modification is found at Ser-142.

This sequence belongs to the PAL/histidase family. Contains an active site 4-methylidene-imidazol-5-one (MIO), which is formed autocatalytically by cyclization and dehydration of residues Ala-Ser-Gly.

Its subcellular location is the cytoplasm. It catalyses the reaction L-histidine = trans-urocanate + NH4(+). It functions in the pathway amino-acid degradation; L-histidine degradation into L-glutamate; N-formimidoyl-L-glutamate from L-histidine: step 1/3. The protein is Histidine ammonia-lyase of Burkholderia lata (strain ATCC 17760 / DSM 23089 / LMG 22485 / NCIMB 9086 / R18194 / 383).